The sequence spans 321 residues: Methionyl-tRNA formyltransferase (321 aa).

111 to 114 lines the (6S)-5,6,7,8-tetrahydrofolate pocket; the sequence is GLLP.

This sequence belongs to the Fmt family.

The catalysed reaction is L-methionyl-tRNA(fMet) + (6R)-10-formyltetrahydrofolate = N-formyl-L-methionyl-tRNA(fMet) + (6S)-5,6,7,8-tetrahydrofolate + H(+). In terms of biological role, attaches a formyl group to the free amino group of methionyl-tRNA(fMet). The formyl group appears to play a dual role in the initiator identity of N-formylmethionyl-tRNA by promoting its recognition by IF2 and preventing the misappropriation of this tRNA by the elongation apparatus. The protein is Methionyl-tRNA formyltransferase of Chlamydia pneumoniae (Chlamydophila pneumoniae).